The chain runs to 201 residues: Pyridoxal 5'-phosphate synthase subunit PdxT (201 aa).

49-51 (GES) provides a ligand contact to L-glutamine. Catalysis depends on cysteine 81, which acts as the Nucleophile. L-glutamine contacts are provided by residues arginine 110 and 139 to 140 (IR). Active-site charge relay system residues include histidine 180 and glutamate 182.

It belongs to the glutaminase PdxT/SNO family. As to quaternary structure, in the presence of PdxS, forms a dodecamer of heterodimers. Only shows activity in the heterodimer.

It carries out the reaction aldehydo-D-ribose 5-phosphate + D-glyceraldehyde 3-phosphate + L-glutamine = pyridoxal 5'-phosphate + L-glutamate + phosphate + 3 H2O + H(+). It catalyses the reaction L-glutamine + H2O = L-glutamate + NH4(+). Its pathway is cofactor biosynthesis; pyridoxal 5'-phosphate biosynthesis. Catalyzes the hydrolysis of glutamine to glutamate and ammonia as part of the biosynthesis of pyridoxal 5'-phosphate. The resulting ammonia molecule is channeled to the active site of PdxS. This is Pyridoxal 5'-phosphate synthase subunit PdxT from Salinispora arenicola (strain CNS-205).